The sequence spans 236 residues: 2-C-methyl-D-erythritol 4-phosphate cytidylyltransferase (236 aa).

Belongs to the IspD/TarI cytidylyltransferase family. IspD subfamily. Homodimer.

The catalysed reaction is 2-C-methyl-D-erythritol 4-phosphate + CTP + H(+) = 4-CDP-2-C-methyl-D-erythritol + diphosphate. The protein operates within isoprenoid biosynthesis; isopentenyl diphosphate biosynthesis via DXP pathway; isopentenyl diphosphate from 1-deoxy-D-xylulose 5-phosphate: step 2/6. Its function is as follows. Catalyzes the formation of 4-diphosphocytidyl-2-C-methyl-D-erythritol from CTP and 2-C-methyl-D-erythritol 4-phosphate (MEP). In Escherichia coli O17:K52:H18 (strain UMN026 / ExPEC), this protein is 2-C-methyl-D-erythritol 4-phosphate cytidylyltransferase.